Here is a 141-residue protein sequence, read N- to C-terminus: Large ribosomal subunit protein uL14 (141 aa).

Belongs to the universal ribosomal protein uL14 family. In terms of assembly, part of the 50S ribosomal subunit. Forms a cluster with proteins L3 and L24e, part of which may contact the 16S rRNA in 2 intersubunit bridges.

In terms of biological role, binds to 23S rRNA. Forms part of two intersubunit bridges in the 70S ribosome. This Pyrococcus furiosus (strain ATCC 43587 / DSM 3638 / JCM 8422 / Vc1) protein is Large ribosomal subunit protein uL14.